A 41-amino-acid polypeptide reads, in one-letter code: ORF3c protein (41 aa).

Its function is as follows. May play a role in host modulation. In Severe acute respiratory syndrome coronavirus 2 (2019-nCoV), this protein is ORF3c protein.